The following is a 107-amino-acid chain: SH3 domain-binding glutamic acid-rich-like protein 2 (107 aa).

An SH3-binding motif is present at residues 61–67; the sequence is QGNPLPP.

It belongs to the SH3BGR family. In terms of tissue distribution, highly expressed in brain, placenta, liver and kidney. Expressed in retina.

The protein resides in the nucleus. The chain is SH3 domain-binding glutamic acid-rich-like protein 2 (SH3BGRL2) from Homo sapiens (Human).